Consider the following 65-residue polypeptide: Large ribosomal subunit protein bL35 (65 aa).

The interval 1 to 47 (MPKIKTNRGAAKRFRKTASGKIKRNSAFTSHILTSKTRKRKRQLRSS) is disordered. Residues 10–24 (AAKRFRKTASGKIKR) show a composition bias toward basic residues. A compositionally biased stretch (polar residues) spans 26 to 35 (SAFTSHILTS).

This sequence belongs to the bacterial ribosomal protein bL35 family.

The polypeptide is Large ribosomal subunit protein bL35 (Geobacter metallireducens (strain ATCC 53774 / DSM 7210 / GS-15)).